Consider the following 249-residue polypeptide: MIKVTDVEKSYQSAHVFKRRRTPIVKGVSFECPIGATIAIIGESGSGKSTLSRMILGIEKPDKGCVTLNDLPMHKKKVRRHQIGAVFQDYTSSLHPFQTVREILFEVMCQCDGQPKEVMEVQAITLLEEVGLSKAYMDKYPNMLSGGEAQRVAIARAICINPKYILFDEAISSLDMSIQTQILDLLIHLRETRQLSYIFITHDIQAATYLCDQLIIFKNGKIEEQIPTSALHKSDNAYTRELIEKQLSF.

In terms of domain architecture, ABC transporter spans 2–244 (IKVTDVEKSY…DNAYTRELIE (243 aa)). 42–49 (GESGSGKS) serves as a coordination point for ATP.

This sequence belongs to the ABC transporter superfamily. In terms of assembly, the complex is composed of two ATP-binding proteins (CntD and CntF), two transmembrane proteins (CntB and CntC) and a solute-binding protein (CntA).

It localises to the cell membrane. Functionally, part of the ABC transporter complex CntABCDF (Opp1) involved in the uptake of metal in complex with the metallophore staphylopine (StP). May be involved in the import of a large array of divalent metals ions such as nickel, cobalt, zinc, copper and iron. Probably responsible for energy coupling to the transport system. This Staphylococcus aureus (strain Mu50 / ATCC 700699) protein is Metal-staphylopine import system ATP-binding protein CntF.